We begin with the raw amino-acid sequence, 443 residues long: Phosphoglucosamine mutase (443 aa).

Ser-101 serves as the catalytic Phosphoserine intermediate. Residues Ser-101, Asp-239, Asp-241, and Asp-243 each contribute to the Mg(2+) site. The residue at position 101 (Ser-101) is a Phosphoserine.

It belongs to the phosphohexose mutase family. It depends on Mg(2+) as a cofactor. Post-translationally, activated by phosphorylation.

The catalysed reaction is alpha-D-glucosamine 1-phosphate = D-glucosamine 6-phosphate. Catalyzes the conversion of glucosamine-6-phosphate to glucosamine-1-phosphate. The protein is Phosphoglucosamine mutase of Francisella tularensis subsp. novicida (strain U112).